Here is a 353-residue protein sequence, read N- to C-terminus: Nucleotide-binding protein sce5766 (353 aa).

Position 27-34 (27-34 (GLSGAGKS)) interacts with ATP. Residue 76–79 (DVRV) coordinates GTP. A disordered region spans residues 310–353 (SGVPSGVGEGMAGAPGVDLRLAQPGATPSEPRPASDTSVTGGER). Positions 344–353 (SDTSVTGGER) are enriched in polar residues.

Belongs to the RapZ-like family.

Its function is as follows. Displays ATPase and GTPase activities. In Sorangium cellulosum (strain So ce56) (Polyangium cellulosum (strain So ce56)), this protein is Nucleotide-binding protein sce5766.